A 415-amino-acid chain; its full sequence is Casein kinase I isoform delta (415 aa).

The Protein kinase domain occupies 9–277 (YRLGRKIGSG…YLRQLFRNLF (269 aa)). ATP contacts are provided by residues 15–23 (IGSGSFGDI) and K38. D128 functions as the Proton acceptor in the catalytic mechanism. Positions 278–364 (HRQGFSYDYV…TSPRPVSGME (87 aa)) are centrosomal localization signal (CLS). Positions 301-315 (ADDAERERRDREERL) are enriched in basic and acidic residues. The disordered stretch occupies residues 301-415 (ADDAERERRD…SSGLQSVVHR (115 aa)). The segment at 317–342 (HSRNPATRGLPSTASGRLRGTQEVAP) is autoinhibitory. Residues S328 and S331 each carry the phosphoserine modification. Over residues 347-358 (TPTSHTANTSPR) the composition is skewed to polar residues. Phosphoserine is present on S370. Omega-N-methylarginine is present on R375. Residues 380–400 (NISSSDLTGRQDTSRMSTSQI) show a composition bias toward polar residues. A phosphoserine mark is found at S382, S383, S384, S407, and S411.

The protein belongs to the protein kinase superfamily. CK1 Ser/Thr protein kinase family. Casein kinase I subfamily. In terms of assembly, monomer. Component of the circadian core oscillator, which includes the CRY proteins, CLOCK, or NPAS2, ARTNL/BMAL1 or ARTNL2/BMAL2, CSNK1D and/or CSNK1E, TIMELESS and the PER proteins. Interacts with DNMT1 and MAP1A. Interacts directly with PER1 and PER2 which may lead to their degradation. Interacts with MAPT/TAU, SNAPIN, DBNDD2, AIB1/NCOA3 and ESR1. Interacts with AKAP9/AKAP450; this interaction promotes centrosomal subcellular location. Binds to tubulins in mitotic cells upon DNA damage. Interacts with GJA1. Interacts with DDX3X; this interaction enhances CSNK1D kinase activity in vitro, but it is unclear whether this interaction is physiologically relevant. Interacts with FAM83A, FAM83B, FAM83E and FAM83H (via DUF1669). Autophosphorylated on serine and threonine residues; this autophosphorylation represses activity. Reactivated by phosphatase-mediated dephosphorylation. May be dephosphorylated by PP1.

The protein localises to the cytoplasm. Its subcellular location is the nucleus. It is found in the cytoskeleton. It localises to the microtubule organizing center. The protein resides in the centrosome. The protein localises to the perinuclear region. Its subcellular location is the cell membrane. It is found in the spindle. It localises to the golgi apparatus. It carries out the reaction L-seryl-[protein] + ATP = O-phospho-L-seryl-[protein] + ADP + H(+). The enzyme catalyses L-threonyl-[protein] + ATP = O-phospho-L-threonyl-[protein] + ADP + H(+). It catalyses the reaction L-seryl-[tau protein] + ATP = O-phospho-L-seryl-[tau protein] + ADP + H(+). The catalysed reaction is L-threonyl-[tau protein] + ATP = O-phospho-L-threonyl-[tau protein] + ADP + H(+). With respect to regulation, exhibits substrate-dependent heparin activation. Drug-mediated inhibition leads to a delay of the oscillations with the magnitude of this effect dependent upon the timing of drug administration. Inhibited by phosphorylation. Essential serine/threonine-protein kinase that regulates diverse cellular growth and survival processes including Wnt signaling, DNA repair and circadian rhythms. It can phosphorylate a large number of proteins. Casein kinases are operationally defined by their preferential utilization of acidic proteins such as caseins as substrates. Phosphorylates connexin-43/GJA1, MAP1A, SNAPIN, MAPT/TAU, TOP2A, DCK, HIF1A, EIF6, p53/TP53, DVL2, DVL3, ESR1, AIB1/NCOA3, DNMT1, PKD2, YAP1, PER1 and PER2. Central component of the circadian clock. In balance with PP1, determines the circadian period length through the regulation of the speed and rhythmicity of PER1 and PER2 phosphorylation. Controls PER1 and PER2 nuclear transport and degradation. YAP1 phosphorylation promotes its SCF(beta-TRCP) E3 ubiquitin ligase-mediated ubiquitination and subsequent degradation. DNMT1 phosphorylation reduces its DNA-binding activity. Phosphorylation of ESR1 and AIB1/NCOA3 stimulates their activity and coactivation. Phosphorylation of DVL2 and DVL3 regulates WNT3A signaling pathway that controls neurite outgrowth. Phosphorylates NEDD9/HEF1. EIF6 phosphorylation promotes its nuclear export. Triggers down-regulation of dopamine receptors in the forebrain. Activates DCK in vitro by phosphorylation. TOP2A phosphorylation favors DNA cleavable complex formation. May regulate the formation of the mitotic spindle apparatus in extravillous trophoblast. Modulates connexin-43/GJA1 gap junction assembly by phosphorylation. Probably involved in lymphocyte physiology. Regulates fast synaptic transmission mediated by glutamate. This is Casein kinase I isoform delta (CSNK1D) from Pongo abelii (Sumatran orangutan).